We begin with the raw amino-acid sequence, 257 residues long: Glutamate racemase (257 aa).

Residues aspartate 12–serine 13 and tyrosine 44–glycine 45 contribute to the substrate site. Cysteine 75 acts as the Proton donor/acceptor in catalysis. Asparagine 76–threonine 77 lines the substrate pocket. Cysteine 185 functions as the Proton donor/acceptor in the catalytic mechanism. Threonine 186–histidine 187 is a substrate binding site.

It belongs to the aspartate/glutamate racemases family.

It carries out the reaction L-glutamate = D-glutamate. The protein operates within cell wall biogenesis; peptidoglycan biosynthesis. Provides the (R)-glutamate required for cell wall biosynthesis. This Clostridium botulinum (strain ATCC 19397 / Type A) protein is Glutamate racemase.